A 345-amino-acid chain; its full sequence is MAKKIVALVGDGIGPEIMEAGLEVLEALAEKTGFDYEIDRRPFGGADIDAAGPPLPDETLKASREADAILLVAIGSPQYDGVAVRPEQGLMALRKELNLYANIRPVKIFDSLKYLSPLKPERISGVDFVVVRELTGEIYFGDHILEERKARDINDYSYEEVERIIRKAFEIARNRRKIVTSIDKQNVLATSKLWRKVAEEVAQDFPDVTLEHQLVDSAAMLMITNPAKFDVIVTENLFGDILSDESSVLSGTLGVMPSASHSENGPSLYEPIHGSAPDIAGQGIANPISMILSVVMMLRDSFGRYEDTERIKRAVETSLAAGILTRDIGGQASTKEMMEAIIARL.

Arg-94, Arg-104, Arg-132, and Asp-216 together coordinate substrate. The Mg(2+) site is built by Asp-216, Asp-240, and Asp-244. 274–286 provides a ligand contact to NAD(+); it reads GSAPDIAGQGIAN.

The protein belongs to the isocitrate and isopropylmalate dehydrogenases family. LeuB type 1 subfamily. In terms of assembly, homodimer. It depends on Mg(2+) as a cofactor. Requires Mn(2+) as cofactor.

It localises to the cytoplasm. It carries out the reaction (2R,3S)-3-isopropylmalate + NAD(+) = 4-methyl-2-oxopentanoate + CO2 + NADH. The protein operates within amino-acid biosynthesis; L-leucine biosynthesis; L-leucine from 3-methyl-2-oxobutanoate: step 3/4. In terms of biological role, catalyzes the oxidation of 3-carboxy-2-hydroxy-4-methylpentanoate (3-isopropylmalate) to 3-carboxy-4-methyl-2-oxopentanoate. The product decarboxylates to 4-methyl-2 oxopentanoate. The chain is 3-isopropylmalate dehydrogenase from Streptococcus pneumoniae (strain ATCC BAA-255 / R6).